We begin with the raw amino-acid sequence, 260 residues long: Opacity protein opA58 (260 aa).

The signal sequence occupies residues 1-23 (MNPAPKKPSLLFSSLLFSSAAQA).

This sequence belongs to the opacity porin family.

The protein localises to the cell outer membrane. In terms of biological role, implicated in a number of adherence functions. OPA proteins are implicated in pathogenesis and are subject to phase variation. The chain is Opacity protein opA58 (opaJ) from Neisseria gonorrhoeae.